We begin with the raw amino-acid sequence, 418 residues long: Tyrosine--tRNA ligase (418 aa).

L-tyrosine is bound at residue tyrosine 38. The 'HIGH' region signature appears at 43-52; sequence CTARSLHIGS. The L-tyrosine site is built by tyrosine 175 and glutamine 179. The 'KMSKS' region signature appears at 235–239; sequence KMGKT. Lysine 238 lines the ATP pocket. The region spanning 348–413 is the S4 RNA-binding domain; sequence LSVVKLLQVS…CGKKRHLKVV (66 aa).

This sequence belongs to the class-I aminoacyl-tRNA synthetase family. TyrS type 1 subfamily. As to quaternary structure, homodimer.

The protein resides in the cytoplasm. It carries out the reaction tRNA(Tyr) + L-tyrosine + ATP = L-tyrosyl-tRNA(Tyr) + AMP + diphosphate + H(+). Catalyzes the attachment of tyrosine to tRNA(Tyr) in a two-step reaction: tyrosine is first activated by ATP to form Tyr-AMP and then transferred to the acceptor end of tRNA(Tyr). This Ehrlichia ruminantium (strain Gardel) protein is Tyrosine--tRNA ligase.